The primary structure comprises 125 residues: Ribosome-binding factor A (125 aa).

It belongs to the RbfA family. Monomer. Binds 30S ribosomal subunits, but not 50S ribosomal subunits or 70S ribosomes.

It localises to the cytoplasm. Functionally, one of several proteins that assist in the late maturation steps of the functional core of the 30S ribosomal subunit. Associates with free 30S ribosomal subunits (but not with 30S subunits that are part of 70S ribosomes or polysomes). Required for efficient processing of 16S rRNA. May interact with the 5'-terminal helix region of 16S rRNA. This Desulfitobacterium hafniense (strain DSM 10664 / DCB-2) protein is Ribosome-binding factor A.